We begin with the raw amino-acid sequence, 580 residues long: MDYPKMDYFLDVESAHRLLDVESAQRFFYSQGAQARRATLLLPPTLMAASSEDDIDRRPIRRVRSKSDTPYLAEARISFNLGAAEEVERLAAMRSDSLVPGTHTPPIRRRSKFANLGRIFKPWKWRKKKSEKFKHTSAALERKISMRQSREELIKRGVLKEIYDKDGELSISNEDDSLENGQSLSSSQLSLPALSEMEPVPMPRDPCSYEVLQASDIMDGPDPGAPVKLPCLPVKLSPPLPPKKVLICMPVGGPELTLASYAAQKSSQQAVAQHHHTVLPSQMQHQLQYGSHGQHLPSSTGTLPMHPSGCRMIDELNKTLAMTMQRLESSEQRVPCSTSYHSSGLHSSDGITKAGPMGLPEIRQVPTVVIECDDNKENVPHEPDYEDSPCLYGREEEEEEEDEDDDASLYTSSLAMKVCRKDSLAIKLSNRPSKRELEEKNILPRQTDEERLELRQQIGTKLTRRLSQRPTAEELEQRNILKPRNEQEEQEEKREIKRRLTRKLSQRPTVEELRERKILIRFSDYVEVADAQDYDRRADKPWTRLTAADKAAIRKELNEFKSTEMEVHELSRHLTRFHRP.

Phosphoserine occurs at positions 67 and 78. Thr-104 is modified (phosphothreonine). The short motif at 108–129 (RRRSKFANLGRIFKPWKWRKKK) is the Nuclear localization signal element. One copy of the RPEL 1 repeat lies at 138-163 (AALERKISMRQSREELIKRGVLKEIY). 2 disordered regions span residues 330-350 (SEQR…SSDG) and 374-408 (DNKE…DDAS). Residues 337–348 (STSYHSSGLHSS) are compositionally biased toward low complexity. A compositionally biased stretch (basic and acidic residues) spans 374–383 (DNKENVPHEP). Positions 395-407 (EEEEEEEDEDDDA) are enriched in acidic residues. 3 RPEL repeats span residues 422–447 (DSLA…PRQT), 460–485 (TKLT…KPRN), and 498–523 (RRLT…IRFS). The interval 463–494 (TRRLSQRPTAEELEQRNILKPRNEQEEQEEKR) is disordered. Ser-467 is modified (phosphoserine). The span at 471–494 (TAEELEQRNILKPRNEQEEQEEKR) shows a compositional bias: basic and acidic residues. Position 505 is a phosphoserine (Ser-505).

The protein belongs to the phosphatase and actin regulator family. Interacts (via RPEL repeats) with ACTA1 and PPP1CA; ACTA1 and PPP1CA compete for the same binding site.

The protein localises to the cytoplasm. It localises to the synapse. Its subcellular location is the nucleus. In terms of biological role, binds actin monomers (G actin) and plays a role in multiple processes including the regulation of actin cytoskeleton dynamics, actin stress fibers formation, cell motility and survival, formation of tubules by endothelial cells, and regulation of PPP1CA activity. Involved in the regulation of cortical neuron migration and dendrite arborization. This is Phosphatase and actin regulator 1 (Phactr1) from Mus musculus (Mouse).